The primary structure comprises 738 residues: AP-4 complex subunit beta-1 (738 aa).

Residues 534–600 form a hinge region; that stretch reads CSPKSDPSLG…NASFATSGHL (67 aa). An ear; mediates interaction with TEPSIN region spans residues 601 to 738; the sequence is ISEENKEGAQ…VIGTVGDIKS (138 aa).

This sequence belongs to the adaptor complexes large subunit family. In terms of assembly, adaptor protein complex 4 (AP-4) is a heterotetramer composed of two large adaptins (epsilon-type subunit AP4E1 and beta-type subunit AP4B1), a medium adaptin (mu-type subunit AP4M1) and a small adaptin (sigma-type AP4S1). Interacts with TEPSIN; this interaction requires the presence of a functional AP-4 complex. Interacts with GRIA2; probably indirect it mediates the somatodendritic localization of GRIA2 in neurons.

Its subcellular location is the golgi apparatus. It localises to the trans-Golgi network membrane. Component of the adaptor protein complex 4 (AP-4). Adaptor protein complexes are vesicle coat components involved both in vesicle formation and cargo selection. They control the vesicular transport of proteins in different trafficking pathways. AP-4 forms a non clathrin-associated coat on vesicles departing the trans-Golgi network (TGN) and may be involved in the targeting of proteins from the trans-Golgi network (TGN) to the endosomal-lysosomal system. It is also involved in protein sorting to the basolateral membrane in epithelial cells and the proper asymmetric localization of somatodendritic proteins in neurons. AP-4 is involved in the recognition and binding of tyrosine-based sorting signals found in the cytoplasmic part of cargos, but may also recognize other types of sorting signal. This is AP-4 complex subunit beta-1 from Mus musculus (Mouse).